Consider the following 214-residue polypeptide: Phosphatidylcholine transfer protein (214 aa).

M1 is subject to N-acetylmethionine. Residues 1–212 (MAGAACCFSD…MVKACQNYHK (212 aa)) form the START domain. The a 1,2-diacyl-sn-glycero-3-phosphocholine site is built by Y72 and R78. At S139 the chain carries Phosphoserine. Q157 contacts a 1,2-diacyl-sn-glycero-3-phosphocholine.

Interacts with ACOT13/THEM2. Abundant in liver of pups but levels in liver decrease 10-fold about 2 weeks after birth. In adult, highly expressed in epididymis, testis, kidney and bone-marrow derived mast cells.

The protein resides in the cytoplasm. Catalyzes the transfer of phosphatidylcholine between membranes. Binds a single lipid molecule. The polypeptide is Phosphatidylcholine transfer protein (Pctp) (Mus musculus (Mouse)).